The chain runs to 127 residues: Major sperm protein 10/36/56/76 (127 aa).

Position 2 is an N-acetylalanine (Ala-2). Positions 9-126 (DIQTQPNAKI…RRKNLPIEYN (118 aa)) constitute an MSP domain.

Sperm.

Its subcellular location is the cell projection. The protein localises to the pseudopodium. It is found in the cytoplasm. The protein resides in the cytoskeleton. Central component in molecular interactions underlying sperm crawling. Forms an extensive filament system that extends from sperm villipoda, along the leading edge of the pseudopod. The sequence is that of Major sperm protein 10/36/56/76 (msp-10) from Caenorhabditis elegans.